Consider the following 256-residue polypeptide: 4-oxalocrotonate decarboxylase (256 aa).

Belongs to the hydratase/decarboxylase family. In terms of assembly, forms a complex with AmnF. Mg(2+) is required as a cofactor. The cofactor is Mn(2+).

It carries out the reaction (3E)-2-oxohex-3-enedioate + H(+) = 2-oxopent-4-enoate + CO2. With respect to regulation, strongly inhibited by Fe(2+), Fe(3+), K(3)[Fe(CN)(6)], Ag(+) and Cu(2+). Functionally, involved in the modified meta-cleavage pathway for the 2-aminophenol catabolism. This chain is 4-oxalocrotonate decarboxylase (amnE), found in Pseudomonas sp.